Here is a 302-residue protein sequence, read N- to C-terminus: Segregation and condensation protein A (302 aa).

The protein belongs to the ScpA family. As to quaternary structure, component of a cohesin-like complex composed of ScpA, ScpB and the Smc homodimer, in which ScpA and ScpB bind to the head domain of Smc. The presence of the three proteins is required for the association of the complex with DNA.

It localises to the cytoplasm. In terms of biological role, participates in chromosomal partition during cell division. May act via the formation of a condensin-like complex containing Smc and ScpB that pull DNA away from mid-cell into both cell halves. The protein is Segregation and condensation protein A of Xylella fastidiosa (strain Temecula1 / ATCC 700964).